The sequence spans 349 residues: Crinkler effector protein 5 (349 aa).

The first 17 residues, 1–17 (MVKLFCSIVGVAGSPFS), serve as a signal peptide directing secretion. An LQLFLAK domain region spans residues 18–57 (VEVNEGKTVDDLKKAIKAENLDDPTLRNVAPKNLQLFLAK). The interval 58-108 (KGDAWLRYNEDLDTYLQSEIDTSSYLHMRASWKLSKPTLFGPDVSLGEDVV) is DWL domain. The short motif at 109–115 (HVLVVVP) is the HVLVXXP motif element.

Belongs to the Crinkler effector family.

The protein resides in the secreted. It is found in the host nucleus. Its function is as follows. Secreted effector that elicits necrosis in host plants, a characteristic of plant innate immunity. The polypeptide is Crinkler effector protein 5 (Phytophthora infestans (Potato late blight agent)).